We begin with the raw amino-acid sequence, 730 residues long: Pheromone-processing carboxypeptidase KEX1 (730 aa).

The first 19 residues, 1–19, serve as a signal peptide directing secretion; it reads MLHATVLPILLWLATLAYG. Over 20-599 the chain is Lumenal; sequence FDRKEFLVDG…DEDEEGSNFK (580 aa). Residue Asn60 is glycosylated (N-linked (GlcNAc...) asparagine). Active-site residues include Ser181, Asp376, and His441. Residues 475–590 form a disordered region; sequence SSKDGDIDGY…LETGGEYYQD (116 aa). Over residues 486-497 the composition is skewed to basic and acidic residues; the sequence is EDDKSQDENKDN. N-linked (GlcNAc...) asparagine glycans are attached at residues Asn497 and Asn507. The span at 498 to 514 shows a compositional bias: acidic residues; that stretch reads ESEDESEDENDSDDESD. A compositionally biased stretch (basic and acidic residues) spans 515–526; it reads GKEGDKQENKPD. Composition is skewed to acidic residues over residues 527 to 557 and 579 to 590; these read DSDDESDEEDDDEDEDDEDDDDDDDDDDGDD and NDLETGGEYYQD. The helical transmembrane segment at 600 to 620 threads the bilayer; sequence AFFLILSLVSAFIIVAAFYIS. Topologically, residues 621 to 730 are cytoplasmic; the sequence is DYIKSRRHPI…DIELQDIERH (110 aa). Residues 684-730 form a disordered region; sequence EDEEQLEGVVPESTRKSKKGSKKKGKYFSVPNDDSAEDIELQDIERH. Positions 699–709 are enriched in basic residues; sequence KSKKGSKKKGK. Acidic residues predominate over residues 717 to 730; sequence DSAEDIELQDIERH.

It belongs to the peptidase S10 family.

It is found in the golgi apparatus. Its subcellular location is the trans-Golgi network membrane. The enzyme catalyses Preferential release of a C-terminal arginine or lysine residue.. Protease with a carboxypeptidase B-like function involved in the C-terminal processing of the lysine and arginine residues from protein precursors. Promotes cell fusion and is involved in the programmed cell death. This is Pheromone-processing carboxypeptidase KEX1 (KEX1) from Candida glabrata (strain ATCC 2001 / BCRC 20586 / JCM 3761 / NBRC 0622 / NRRL Y-65 / CBS 138) (Yeast).